The sequence spans 569 residues: Pyrophosphate--fructose 6-phosphate 1-phosphotransferase subunit beta (569 aa).

Position 107 (glycine 107) interacts with diphosphate. Aspartate 201 is a binding site for Mg(2+). Residues 229–231 (TID), 268–269 (KY), 276–278 (MGR), glutamate 337, and 442–445 (YEGR) contribute to the substrate site. The active-site Proton acceptor is the aspartate 231.

It belongs to the phosphofructokinase type A (PFKA) family. PPi-dependent PFK group II subfamily. Clade 'Long' sub-subfamily. In terms of assembly, tetramer of two alpha (regulatory) and two beta (catalytic) chains. The cofactor is Mg(2+).

The protein resides in the cytoplasm. It carries out the reaction beta-D-fructose 6-phosphate + diphosphate = beta-D-fructose 1,6-bisphosphate + phosphate + H(+). It functions in the pathway carbohydrate degradation; glycolysis; D-glyceraldehyde 3-phosphate and glycerone phosphate from D-glucose: step 3/4. Its activity is regulated as follows. Allosterically activated by fructose 2,6-bisphosphate. Functionally, catalytic subunit of pyrophosphate--fructose 6-phosphate 1-phosphotransferase. Catalyzes the phosphorylation of D-fructose 6-phosphate, the first committing step of glycolysis. Uses inorganic phosphate (PPi) as phosphoryl donor instead of ATP like common ATP-dependent phosphofructokinases (ATP-PFKs), which renders the reaction reversible, and can thus function both in glycolysis and gluconeogenesis. This is Pyrophosphate--fructose 6-phosphate 1-phosphotransferase subunit beta from Solanum tuberosum (Potato).